Reading from the N-terminus, the 177-residue chain is Large ribosomal subunit protein uL6 (177 aa).

Belongs to the universal ribosomal protein uL6 family. Part of the 50S ribosomal subunit.

This protein binds to the 23S rRNA, and is important in its secondary structure. It is located near the subunit interface in the base of the L7/L12 stalk, and near the tRNA binding site of the peptidyltransferase center. The sequence is that of Large ribosomal subunit protein uL6 from Dinoroseobacter shibae (strain DSM 16493 / NCIMB 14021 / DFL 12).